The sequence spans 74 residues: DNA-directed RNA polymerase subunit omega (74 aa).

This sequence belongs to the RNA polymerase subunit omega family. In terms of assembly, the RNAP catalytic core consists of 2 alpha, 1 beta, 1 beta' and 1 omega subunit. When a sigma factor is associated with the core the holoenzyme is formed, which can initiate transcription.

The enzyme catalyses RNA(n) + a ribonucleoside 5'-triphosphate = RNA(n+1) + diphosphate. Promotes RNA polymerase assembly. Latches the N- and C-terminal regions of the beta' subunit thereby facilitating its interaction with the beta and alpha subunits. This chain is DNA-directed RNA polymerase subunit omega, found in Hydrogenovibrio crunogenus (strain DSM 25203 / XCL-2) (Thiomicrospira crunogena).